A 607-amino-acid chain; its full sequence is Elongation factor 4 (607 aa).

The 183-residue stretch at 11–193 folds into the tr-type G domain; sequence SKIRNFSIIA…QIVEKVPAPT (183 aa). GTP-binding positions include 23 to 28 and 140 to 143; these read DHGKST and NKID.

It belongs to the TRAFAC class translation factor GTPase superfamily. Classic translation factor GTPase family. LepA subfamily.

It is found in the cell membrane. The enzyme catalyses GTP + H2O = GDP + phosphate + H(+). Its function is as follows. Required for accurate and efficient protein synthesis under certain stress conditions. May act as a fidelity factor of the translation reaction, by catalyzing a one-codon backward translocation of tRNAs on improperly translocated ribosomes. Back-translocation proceeds from a post-translocation (POST) complex to a pre-translocation (PRE) complex, thus giving elongation factor G a second chance to translocate the tRNAs correctly. Binds to ribosomes in a GTP-dependent manner. The sequence is that of Elongation factor 4 from Bacillus anthracis (strain A0248).